The primary structure comprises 72 residues: uncharacterized protein (72 aa).

A helical membrane pass occupies residues 41–58 (FSFLVHIMCGLTLTSYVI).

The protein resides in the membrane. This is an uncharacterized protein from Dictyostelium discoideum (Social amoeba).